An 89-amino-acid polypeptide reads, in one-letter code: MASLYDNEAKIKQAIIMLQKIVNDTSVPRNIRRAATDAIRNLQDSSLSPAVRAANAIGILEEISQDPNMPTHTRISIWNVVSMLETVKD.

The protein belongs to the UPF0147 family.

The sequence is that of UPF0147 protein STK_04605 from Sulfurisphaera tokodaii (strain DSM 16993 / JCM 10545 / NBRC 100140 / 7) (Sulfolobus tokodaii).